We begin with the raw amino-acid sequence, 565 residues long: MSEQKLALNEYLKTDSDYLRGTIKEGLDSSVTGSFSDGDQQLIKFHGFYQQDDRDLRNERKEQKLEPLYSFMLRARVPGGVCTPKQWLGVDEIASTLTSSNSIRLTTRQTFQYHGIPKRNLKTIIQGLDREALDSIAACGDVNRNVMCNPNPVESKLHAQAYEVAKKLSDHLLPHTRAYAEIWLDEEKLLTTEDETVEPVYGKTYLPRKFKMAVAVPPDNDVDVYTNDLGFIAVAENGELVGFNLTAGGGMGSTHGEVETFPRLADDFGFIKTEDVMKFAEAVMTVQRDWGNRTNRKRSRLKYTIVDHGYEKFKAEVEARAGVKFEPKRDVVIGDRGDRYGWVEGVDGKWHLTLFIESGRIKDVPGKSLQTGMREIAKIHKGDFRMTSNQNMIIAGVAPEDKATIEGLARKHGLLGQVLTQTRGHSIACVALPTCPLAMAEAERYFPEFIDHIDALQAKNGISDQAIVVRMTGCPNGCARPFAAEIGLVGKAPGRYNLYLGANFEGTRLNKMYRENIQEAEILAELDALFARYAIERNAGETFGNFTVRTGVVKAVIDAAKDFHG.

The [4Fe-4S] cluster site is built by C429, C435, C474, and C478. C478 contacts siroheme.

It belongs to the nitrite and sulfite reductase 4Fe-4S domain family. In terms of assembly, alpha(8)-beta(8). The alpha component is a flavoprotein, the beta component is a hemoprotein. Siroheme is required as a cofactor. Requires [4Fe-4S] cluster as cofactor.

It catalyses the reaction hydrogen sulfide + 3 NADP(+) + 3 H2O = sulfite + 3 NADPH + 4 H(+). The protein operates within sulfur metabolism; hydrogen sulfide biosynthesis; hydrogen sulfide from sulfite (NADPH route): step 1/1. Its function is as follows. Component of the sulfite reductase complex that catalyzes the 6-electron reduction of sulfite to sulfide. This is one of several activities required for the biosynthesis of L-cysteine from sulfate. This Shewanella sp. (strain MR-4) protein is Sulfite reductase [NADPH] hemoprotein beta-component.